A 185-amino-acid chain; its full sequence is MSRRNKKRSRRRRKKPLNDIQPGPSKSSAQDEPIKSVSHHLSKIGTNPTLAFILGGNEDLSDDSDWDENFSLENTLMPLNEVSLNDKHNSKHFNKGFDNNTALHEVNTKWEAFYSSVKIRQRNVKVHFATDDILVDVREADDIDRKGPWEQAAVDRLRFQRRITDTEEILSTVFLRKKLNPMEHE.

Residues 1-15 (MSRRNKKRSRRRRKK) show a composition bias toward basic residues. The disordered stretch occupies residues 1–38 (MSRRNKKRSRRRRKKPLNDIQPGPSKSSAQDEPIKSVS). Important for host CHOP inhibition stretches follow at residues 126-128 (VHF) and 170-174 (LSTVF).

It belongs to the asfivirus DP71L family. Interacts (via C-terminus) with host PPP1CB.

Functionally, interacts with the host phosphatase PP1 catalytic subunit (PPP1CB) and recruits it to dephosphorylate EIF2S1/eIF2alpha and therefore restores the host translation that has been shut-down by the host. Also inhibits the EIF2S1/eIF2alpha-ATF4-DDIT3/CHOP pathway. The chain is Protein DP71L from African swine fever virus (isolate Pig/Kenya/KEN-50/1950) (ASFV).